The following is a 66-amino-acid chain: Large ribosomal subunit protein bL31 (66 aa).

4 residues coordinate Zn(2+): C16, C18, C36, and C39.

It belongs to the bacterial ribosomal protein bL31 family. Type A subfamily. Part of the 50S ribosomal subunit. Requires Zn(2+) as cofactor.

Functionally, binds the 23S rRNA. In Geobacillus thermodenitrificans (strain NG80-2), this protein is Large ribosomal subunit protein bL31.